A 155-amino-acid polypeptide reads, in one-letter code: Small ribosomal subunit protein uS7 (155 aa).

The protein belongs to the universal ribosomal protein uS7 family. As to quaternary structure, part of the 30S ribosomal subunit. Contacts proteins S9 and S11.

Its function is as follows. One of the primary rRNA binding proteins, it binds directly to 16S rRNA where it nucleates assembly of the head domain of the 30S subunit. Is located at the subunit interface close to the decoding center, probably blocks exit of the E-site tRNA. This chain is Small ribosomal subunit protein uS7, found in Mycoplasma capricolum subsp. capricolum (strain California kid / ATCC 27343 / NCTC 10154).